We begin with the raw amino-acid sequence, 136 residues long: MKQLAQRLFSLALVLALVLGISVQSAQALSLQSPLLAVAEAEIRNEADAQRIEAGGKLDLNNIGVRAFQQFPGMYPYLASKIVLGGPYDSVDDVLKLDLSDRQREVFEQYKENFTVTPPRDALNEGDDRINNGIYR.

Residues 1–28 (MKQLAQRLFSLALVLALVLGISVQSAQA) form the signal peptide.

Belongs to the PsbU family. In terms of assembly, PSII is composed of 1 copy each of membrane proteins PsbA, PsbB, PsbC, PsbD, PsbE, PsbF, PsbH, PsbI, PsbJ, PsbK, PsbL, PsbM, PsbT, PsbX, PsbY, PsbZ, Psb30/Ycf12, peripheral proteins PsbO, CyanoQ (PsbQ), PsbU, PsbV and a large number of cofactors. It forms dimeric complexes.

It localises to the cellular thylakoid membrane. In terms of biological role, one of the extrinsic, lumenal subunits of photosystem II (PSII). PSII is a light-driven water plastoquinone oxidoreductase, using light energy to abstract electrons from H(2)O, generating a proton gradient subsequently used for ATP formation. The extrinsic proteins stabilize the structure of photosystem II oxygen-evolving complex (OEC), the ion environment of oxygen evolution and protect the OEC against heat-induced inactivation. In Synechococcus elongatus (strain ATCC 33912 / PCC 7942 / FACHB-805) (Anacystis nidulans R2), this protein is Photosystem II extrinsic protein U.